The following is a 479-amino-acid chain: Small ribosomal subunit protein bS1 (479 aa).

S1 motif domains follow at residues 36–105, 123–188, 209–277, and 294–363; these read GDIV…LSKK, DEAV…LSRR, GAIR…LSLK, and GQIV…LSLK. The disordered stretch occupies residues 429–466; sequence TAQMEKFAAAEAEAANAPVSNGSSRSEESSGGTLASDA. The segment covering 437–460 has biased composition (low complexity); the sequence is AAEAEAANAPVSNGSSRSEESSGG.

The protein belongs to the bacterial ribosomal protein bS1 family. As to quaternary structure, binds uncharacterized protein MSMEG_2731/MSMEI_2664.

Binds mRNA, facilitating recognition of most mRNAs by the 30S ribosomal subunit during translation initiation. Plays a role in trans-translation; binds tmRNA (the product of the ssrA gene). Binds very poorly to pyrazinoic acid (POA), the active form of the prodrug pyrazinamide (PZA); POA does not disrupt trans-translation in this organism. M.smegmatis is resistant to the antibiotic PZA. In trans-translation Ala-aminoacylated transfer-messenger RNA (tmRNA, product of the ssrA gene; the 2 termini fold to resemble tRNA(Ala) while it encodes a short internal open reading frame (the tag peptide)) acts like a tRNA, entering the A-site of the ribosome and displacing the stalled mRNA (which is subsequently degraded). The ribosome then switches to translate the ORF on the tmRNA, the nascent peptide is terminated with the 'tag peptide' encoded by the tmRNA and thus targeted for degradation. This is Small ribosomal subunit protein bS1 (rpsA) from Mycolicibacterium smegmatis (strain ATCC 700084 / mc(2)155) (Mycobacterium smegmatis).